Consider the following 193-residue polypeptide: Putative F-box protein At1g31072 (193 aa).

An F-box domain is found at Glu-4 to Met-53.

This Arabidopsis thaliana (Mouse-ear cress) protein is Putative F-box protein At1g31072.